The following is a 497-amino-acid chain: Probable malate:quinone oxidoreductase (497 aa).

It belongs to the MQO family. FAD is required as a cofactor.

It catalyses the reaction (S)-malate + a quinone = a quinol + oxaloacetate. Its pathway is carbohydrate metabolism; tricarboxylic acid cycle; oxaloacetate from (S)-malate (quinone route): step 1/1. This chain is Probable malate:quinone oxidoreductase, found in Exiguobacterium sibiricum (strain DSM 17290 / CCUG 55495 / CIP 109462 / JCM 13490 / 255-15).